The sequence spans 66 residues: Large ribosomal subunit protein uL29 (66 aa).

It belongs to the universal ribosomal protein uL29 family.

This Thermotoga neapolitana (strain ATCC 49049 / DSM 4359 / NBRC 107923 / NS-E) protein is Large ribosomal subunit protein uL29.